Here is a 379-residue protein sequence, read N- to C-terminus: Cytochrome b (379 aa).

A run of 4 helical transmembrane segments spans residues 33–53 (FGSL…FLAM), 77–98 (WLIR…FIHV), 113–133 (WNIG…GYVL), and 178–198 (FFAF…VHLL). Positions 83 and 97 each coordinate heme b. Positions 182 and 196 each coordinate heme b. His-201 serves as a coordination point for a ubiquinone. The next 4 membrane-spanning stretches (helical) occupy residues 226–246 (IKDL…ALFF), 288–308 (LGGV…PLLN), 320–340 (ITQT…WIGG), and 347–367 (FTTI…ILMP).

The protein belongs to the cytochrome b family. The cytochrome bc1 complex contains 11 subunits: 3 respiratory subunits (MT-CYB, CYC1 and UQCRFS1), 2 core proteins (UQCRC1 and UQCRC2) and 6 low-molecular weight proteins (UQCRH/QCR6, UQCRB/QCR7, UQCRQ/QCR8, UQCR10/QCR9, UQCR11/QCR10 and a cleavage product of UQCRFS1). This cytochrome bc1 complex then forms a dimer. It depends on heme b as a cofactor.

Its subcellular location is the mitochondrion inner membrane. Its function is as follows. Component of the ubiquinol-cytochrome c reductase complex (complex III or cytochrome b-c1 complex) that is part of the mitochondrial respiratory chain. The b-c1 complex mediates electron transfer from ubiquinol to cytochrome c. Contributes to the generation of a proton gradient across the mitochondrial membrane that is then used for ATP synthesis. This is Cytochrome b (MT-CYB) from Akodon aerosus (Highland grass mouse).